The following is a 356-amino-acid chain: D-alanine--D-alanine ligase (356 aa).

One can recognise an ATP-grasp domain in the interval 134 to 339; the sequence is KQLFAHRGLP…YSDLIKKLIE (206 aa). Position 167-222 (167-222) interacts with ATP; it reads HDKLEYPVFVKPANLGSSVGISKCNNEEELKNGIEEAFQFDRKLVIEQGIEAREIE. Positions 293, 306, and 308 each coordinate Mg(2+).

It belongs to the D-alanine--D-alanine ligase family. The cofactor is Mg(2+). Mn(2+) is required as a cofactor.

Its subcellular location is the cytoplasm. The enzyme catalyses 2 D-alanine + ATP = D-alanyl-D-alanine + ADP + phosphate + H(+). Its pathway is cell wall biogenesis; peptidoglycan biosynthesis. In terms of biological role, cell wall formation. This Staphylococcus saprophyticus subsp. saprophyticus (strain ATCC 15305 / DSM 20229 / NCIMB 8711 / NCTC 7292 / S-41) protein is D-alanine--D-alanine ligase.